Reading from the N-terminus, the 196-residue chain is Ribosome-binding factor A (196 aa).

This sequence belongs to the RbfA family. Monomer. Binds 30S ribosomal subunits, but not 50S ribosomal subunits or 70S ribosomes.

The protein localises to the cytoplasm. One of several proteins that assist in the late maturation steps of the functional core of the 30S ribosomal subunit. Associates with free 30S ribosomal subunits (but not with 30S subunits that are part of 70S ribosomes or polysomes). Required for efficient processing of 16S rRNA. May interact with the 5'-terminal helix region of 16S rRNA. The polypeptide is Ribosome-binding factor A (Tropheryma whipplei (strain TW08/27) (Whipple's bacillus)).